The primary structure comprises 115 residues: uncharacterized protein (115 aa).

This is an uncharacterized protein from Dictyostelium discoideum (Social amoeba).